The primary structure comprises 301 residues: Troponin T, cardiac muscle (301 aa).

Composition is skewed to acidic residues over residues 1 to 42 (MSDL…EEEA) and 50 to 74 (AETEETQAEEDGQEEEDKEDEDGPV). Disordered regions lie at residues 1-99 (MSDL…GERV) and 125-223 (ENRK…KKKK). Serine 2 carries the post-translational modification N-acetylserine. A Phosphoserine; by CK2 modification is found at serine 2. Over residues 82–93 (RPFMPNLVPPKI) the composition is skewed to pro residues. Composition is skewed to basic and acidic residues over residues 125 to 186 (ENRK…DEAR) and 206 to 223 (QTERKSGKRQTEREKKKK). The residue at position 207 (threonine 207) is a Phosphothreonine; by PKC/PRKCA. At serine 211 the chain carries Phosphoserine; by PKC/PRKCA. A Phosphothreonine; by PKC/PRKCA and RAF1 modification is found at threonine 216. Threonine 297 bears the Phosphothreonine; by PKC/PRKCA mark.

The protein belongs to the troponin T family. As to quaternary structure, binds with troponins I and C to make the thin-filament regulatory complex, troponin. Phosphorylation at Thr-216 by PRKCA induces significant reduction in myofilament calcium sensitivity and actomyosin ATPase activity. In terms of tissue distribution, the major isoform in adult heart is CTNT4.

Troponin T is the tropomyosin-binding subunit of troponin, the thin filament regulatory complex which confers calcium-sensitivity to striated muscle actomyosin ATPase activity. This is Troponin T, cardiac muscle (TNNT2) from Oryctolagus cuniculus (Rabbit).